Consider the following 364-residue polypeptide: Aminomethyltransferase (364 aa).

Belongs to the GcvT family. As to quaternary structure, the glycine cleavage system is composed of four proteins: P, T, L and H.

It catalyses the reaction N(6)-[(R)-S(8)-aminomethyldihydrolipoyl]-L-lysyl-[protein] + (6S)-5,6,7,8-tetrahydrofolate = N(6)-[(R)-dihydrolipoyl]-L-lysyl-[protein] + (6R)-5,10-methylene-5,6,7,8-tetrahydrofolate + NH4(+). In terms of biological role, the glycine cleavage system catalyzes the degradation of glycine. In Shewanella sp. (strain MR-4), this protein is Aminomethyltransferase.